We begin with the raw amino-acid sequence, 203 residues long: MIVVLRLGHRPERDKRVTTHVALTARAFGADGIIIASEEDEKVKESVEDVVKRWGGPFFIEFNRNWRKVMKEFTGVKVHLTMYGLHVDDVIEELKEKLKKGEDFMIIVGAEKVPREVYELADYNVAIGNQPHSEVAALAVLLDRLLEGKGLKKEFKGAKIKIVPQARGKKVVEVQGYAEQDKAEGKATPGKNWENSGFTGDNP.

Residues Leu-80, 109–113 (GAEKV), and 127–134 (IGNQPHSE) each bind S-adenosyl-L-methionine. A disordered region spans residues 178–203 (AEQDKAEGKATPGKNWENSGFTGDNP). Polar residues predominate over residues 193-203 (WENSGFTGDNP).

The protein belongs to the aTrm56 family. Homodimer.

It localises to the cytoplasm. The enzyme catalyses cytidine(56) in tRNA + S-adenosyl-L-methionine = 2'-O-methylcytidine(56) in tRNA + S-adenosyl-L-homocysteine + H(+). Its function is as follows. Specifically catalyzes the AdoMet-dependent 2'-O-ribose methylation of cytidine at position 56 in tRNAs. The protein is tRNA (cytidine(56)-2'-O)-methyltransferase of Pyrococcus horikoshii (strain ATCC 700860 / DSM 12428 / JCM 9974 / NBRC 100139 / OT-3).